The following is a 940-amino-acid chain: Isoleucine--tRNA ligase (940 aa).

The 'HIGH' region motif lies at 58 to 68; that stretch reads PYANGSIHIGH. Glu564 lines the L-isoleucyl-5'-AMP pocket. The 'KMSKS' region motif lies at 605–609; that stretch reads KMSKS. Lys608 serves as a coordination point for ATP. Residues Cys903, Cys906, Cys923, and Cys926 each coordinate Zn(2+).

This sequence belongs to the class-I aminoacyl-tRNA synthetase family. IleS type 1 subfamily. As to quaternary structure, monomer. It depends on Zn(2+) as a cofactor.

Its subcellular location is the cytoplasm. The enzyme catalyses tRNA(Ile) + L-isoleucine + ATP = L-isoleucyl-tRNA(Ile) + AMP + diphosphate. Functionally, catalyzes the attachment of isoleucine to tRNA(Ile). As IleRS can inadvertently accommodate and process structurally similar amino acids such as valine, to avoid such errors it has two additional distinct tRNA(Ile)-dependent editing activities. One activity is designated as 'pretransfer' editing and involves the hydrolysis of activated Val-AMP. The other activity is designated 'posttransfer' editing and involves deacylation of mischarged Val-tRNA(Ile). This Shewanella putrefaciens (strain CN-32 / ATCC BAA-453) protein is Isoleucine--tRNA ligase.